A 308-amino-acid polypeptide reads, in one-letter code: Elongation factor Ts (308 aa).

The interval 79–82 (TDFV) is involved in Mg(2+) ion dislocation from EF-Tu.

It belongs to the EF-Ts family.

It is found in the cytoplasm. Its function is as follows. Associates with the EF-Tu.GDP complex and induces the exchange of GDP to GTP. It remains bound to the aminoacyl-tRNA.EF-Tu.GTP complex up to the GTP hydrolysis stage on the ribosome. This chain is Elongation factor Ts, found in Bdellovibrio bacteriovorus (strain ATCC 15356 / DSM 50701 / NCIMB 9529 / HD100).